The chain runs to 470 residues: ATP synthase subunit beta (470 aa).

Residue 157-164 participates in ATP binding; it reads GGAGVGKT.

The protein belongs to the ATPase alpha/beta chains family. As to quaternary structure, F-type ATPases have 2 components, CF(1) - the catalytic core - and CF(0) - the membrane proton channel. CF(1) has five subunits: alpha(3), beta(3), gamma(1), delta(1), epsilon(1). CF(0) has three main subunits: a(1), b(2) and c(9-12). The alpha and beta chains form an alternating ring which encloses part of the gamma chain. CF(1) is attached to CF(0) by a central stalk formed by the gamma and epsilon chains, while a peripheral stalk is formed by the delta and b chains.

The protein resides in the cell inner membrane. It catalyses the reaction ATP + H2O + 4 H(+)(in) = ADP + phosphate + 5 H(+)(out). Its function is as follows. Produces ATP from ADP in the presence of a proton gradient across the membrane. The catalytic sites are hosted primarily by the beta subunits. The protein is ATP synthase subunit beta of Geotalea daltonii (strain DSM 22248 / JCM 15807 / FRC-32) (Geobacter daltonii).